Here is a 131-residue protein sequence, read N- to C-terminus: Global transcriptional regulator Spx (131 aa).

Positions 10 to 13 (CTSC) match the CXXC motif. Cys10 and Cys13 are oxidised to a cystine.

This sequence belongs to the ArsC family. Spx subfamily. In terms of assembly, interacts with the C-terminal domain of the alpha subunit of the RNAP. A single Spx monomer interacts with RNAP to form the transcription activation complex. Interacts with the adapter protein SpxH/YjbH.

It is found in the cytoplasm. Its activity is regulated as follows. Under non-stress conditions, Spx is degraded by ClpXP and, to a lesser extent, by ClpCP. Efficient dedradation by ClpXP requires the adapter protein SpxH/YjbH. Binding to SpxH/YjbH reduces the overall conformational flexibility of Spx and stabilizes the C-terminal ClpX recognition region of Spx. In addition, activity is modulated by the formation of a disulfide bound within the N-terminal Cys-X-X-Cys (CXXC) motif, which is required for the transcriptional activation of trxA and trxB, or for the activation of msrAB operon expression following paraquat oxidative stress. However, it seems that formation of the disulfide bound is not essential for induction of all Spx-controlled genes, as for example the case of BSH biosynthesis genes. Similarly, induction of the Spx regulon during cell wall stress is not accompanied by oxidation of the disulfide switch, but requires Spx stabilization by the anti-adapter protein SpxO/YirB. Functionally, global transcriptional regulator that plays a key role in stress response and exerts either positive or negative regulation of genes. Acts by interacting with the C-terminal domain of the alpha subunit of the RNA polymerase (RNAP). This interaction can enhance binding of RNAP to the promoter region of target genes and stimulate their transcription, or block interaction of RNAP with activator proteins and repress transcription. Exhibits no DNA-binding activity. Its function is as follows. Induces the expression of a large number of genes in response to a variety of stress conditions, such as disulfide, heat and cell wall stress, while concurrently repressing transcription of genes involved in various developmental and growth-related pathways during periods of extreme stress. Functions in the oxidative stress response via induction of the transcription of thioredoxin (trxA) and thioredoxin reductase (trxB) during thiol-specific oxidative (disulfide) stress. Mediates response to oxidative stress caused by paraquat (PQ) via induction of the methionine sulfoxide reductase genes, msrA and msrB. Also acts as a transcriptional activator of the bacillithiol (BSH) biosynthesis genes in response to oxidizing conditions and thio-reactive compounds. Involved in heat stress response and thermotolerance development, which results in diminished cellular protein aggregates. Plays an important adaptive role in the cell wall stress response. Participates in sulfate-dependent control of organosulfur metabolism. Negatively controls, via CymR, the expression of the organosulfur utilization operons ytmI, yxeI and ssu, and directly activates yrrT operon expression during growth in medium containing methionine as sole sulfur source. Negatively affects competence and sporulation. Inhibits biofilm formation in response to disulfide stress by repressing biofilm matrix genes. This is Global transcriptional regulator Spx from Bacillus subtilis (strain 168).